We begin with the raw amino-acid sequence, 365 residues long: MVTCSMRCTEEGLLGATLAFSSGKRKRDSVYSPGDATPGDRGEGEPKCPSVGTKKRAKYSRHRKQSLELRSCDSGVADLYETPSPSPVAPSPTHEPWDTCTPMYDGLGLQNFRDYGQDCYTFNKSLEDKFLAVNCLKNQPQIQAESRCKLISWLIPVHRHLNLGFESLCLTVNILDRFLACTPVASDCFQLVGVTSLLIASKQVETRPPRVKQLLALCCDAFSREQLCNLECIILLKLHFRLGAPTINFFLQHFSLLRVTNEESSDTELSETTKSVTVARGIAELSLADYAFNSYSPSLMAVCCLEIADRMLCHRNPIRARVSDYHESLIQECVGKIDLLVSLNQDSLHRLLPSQFAVKSINVDN.

The disordered stretch occupies residues 22–64 (SGKRKRDSVYSPGDATPGDRGEGEPKCPSVGTKKRAKYSRHRK). The span at 53–64 (TKKRAKYSRHRK) shows a compositional bias: basic residues.

Belongs to the cyclin family.

Its subcellular location is the cytoplasm. Its function is as follows. Specifically required for generation of multiciliated cells, possibly by promoting a cell cycle state compatible with centriole amplification and maturation. Acts downstream of mcidas to promote mother centriole amplification and maturation in preparation for apical docking. The sequence is that of Cyclin-O protein B (ccno-b) from Xenopus laevis (African clawed frog).